A 241-amino-acid polypeptide reads, in one-letter code: Small ribosomal subunit protein uS3 (241 aa).

The KH type-2 domain occupies 39–107 (IRTYLKKELY…PLSVNIKEEK (69 aa)). Residues 214-241 (AEVKEEQQKEGARRPKRAPKRENSGKAE) form a disordered region. Positions 215–226 (EVKEEQQKEGAR) are enriched in basic and acidic residues.

It belongs to the universal ribosomal protein uS3 family. As to quaternary structure, part of the 30S ribosomal subunit. Forms a tight complex with proteins S10 and S14.

Its function is as follows. Binds the lower part of the 30S subunit head. Binds mRNA in the 70S ribosome, positioning it for translation. This chain is Small ribosomal subunit protein uS3, found in Sulfurimonas denitrificans (strain ATCC 33889 / DSM 1251) (Thiomicrospira denitrificans (strain ATCC 33889 / DSM 1251)).